The following is a 147-amino-acid chain: Cyanate hydratase (147 aa).

Active-site residues include R88, E91, and S114.

The protein belongs to the cyanase family.

It catalyses the reaction cyanate + hydrogencarbonate + 3 H(+) = NH4(+) + 2 CO2. In terms of biological role, catalyzes the reaction of cyanate with bicarbonate to produce ammonia and carbon dioxide. This Prochlorococcus marinus subsp. pastoris (strain CCMP1986 / NIES-2087 / MED4) protein is Cyanate hydratase.